We begin with the raw amino-acid sequence, 962 residues long: Glycine dehydrogenase (decarboxylating) (962 aa).

Position 709 is an N6-(pyridoxal phosphate)lysine (lysine 709).

Belongs to the GcvP family. The glycine cleavage system is composed of four proteins: P, T, L and H. Pyridoxal 5'-phosphate serves as cofactor.

The enzyme catalyses N(6)-[(R)-lipoyl]-L-lysyl-[glycine-cleavage complex H protein] + glycine + H(+) = N(6)-[(R)-S(8)-aminomethyldihydrolipoyl]-L-lysyl-[glycine-cleavage complex H protein] + CO2. Functionally, the glycine cleavage system catalyzes the degradation of glycine. The P protein binds the alpha-amino group of glycine through its pyridoxal phosphate cofactor; CO(2) is released and the remaining methylamine moiety is then transferred to the lipoamide cofactor of the H protein. This Shewanella sediminis (strain HAW-EB3) protein is Glycine dehydrogenase (decarboxylating).